The primary structure comprises 256 residues: Peptidyl-prolyl cis-trans isomerase FKBP19, chloroplastic (256 aa).

Residues 1–29 (MASISSFGCFPQSTALAGTSSTTRCRTTV) constitute a chloroplast transit peptide. Residues 30–88 (AARLADQSDDFAPLRSSGGNCGCVNNSGEFDRRKLLVSSVGLLIGALSYDSKDGDFASA) constitute a thylakoid transit peptide. A PPIase FKBP-type domain is found at 135–254 (GDKVVVDWDG…LFDVELLKIV (120 aa)). Residue serine 164 is modified to Phosphoserine.

The protein belongs to the FKBP-type PPIase family.

The protein resides in the plastid. It is found in the chloroplast thylakoid lumen. The enzyme catalyses [protein]-peptidylproline (omega=180) = [protein]-peptidylproline (omega=0). In terms of biological role, PPIases accelerate the folding of proteins. It catalyzes the cis-trans isomerization of proline imidic peptide bonds in oligopeptides. The protein is Peptidyl-prolyl cis-trans isomerase FKBP19, chloroplastic (FKBP19) of Arabidopsis thaliana (Mouse-ear cress).